The following is a 587-amino-acid chain: ATF/CREB activator 2 (587 aa).

4 disordered regions span residues 1 to 62, 123 to 144, 169 to 195, and 381 to 423; these read MFTG…SRSL, LRQQQQQDQRQQSPSMKTEEES, NLSQLSSTRKSAPNDSTTAPTNASNIA, and TGGE…IPGT. Basic and acidic residues predominate over residues 16 to 29; the sequence is KQKDNNKRGIDDTS. Composition is skewed to low complexity over residues 39–57 and 123–134; these read SVSDTSAAATTTSTMNNSA and LRQQQQQDQRQQ. Phosphoserine occurs at positions 171 and 179. The segment covering 385–395 has biased composition (basic and acidic residues); the sequence is NRGKSALRESH. Polar residues predominate over residues 396–418; that stretch reads SNPSFTPKSQGSHLNLAANTQGN. Serine 399 is modified (phosphoserine). The bZIP domain occupies 425 to 488; sequence AWKRARLLER…SKFKKFSKIH (64 aa). The segment at 427–447 is basic motif; sequence KRARLLERNRIAASKCRQRKK. A leucine-zipper region spans residues 453-467; it reads LQKEFNEIKDENRIL. Residues 552-587 are disordered; that stretch reads SQRFGSDTDDDDIDLKPVEGGKDPDNQSLPNSEKIK. Serine 557 carries the post-translational modification Phosphoserine. Threonine 559 is subject to Phosphothreonine. Residues 565–576 are compositionally biased toward basic and acidic residues; sequence DLKPVEGGKDPD. The segment covering 577-587 has biased composition (polar residues); it reads NQSLPNSEKIK.

The protein belongs to the bZIP family.

Its subcellular location is the nucleus. In terms of biological role, transcriptional activator of promoters containing ATF/CREB sites. Can independently stimulate transcription through ATF/CREB sites. Important for a variety of biological functions including growth on non-optimal carbon sources. The chain is ATF/CREB activator 2 (CST6) from Saccharomyces cerevisiae (strain ATCC 204508 / S288c) (Baker's yeast).